The sequence spans 215 residues: ATP phosphoribosyltransferase (215 aa).

Belongs to the ATP phosphoribosyltransferase family. Short subfamily. As to quaternary structure, heteromultimer composed of HisG and HisZ subunits.

Its subcellular location is the cytoplasm. The enzyme catalyses 1-(5-phospho-beta-D-ribosyl)-ATP + diphosphate = 5-phospho-alpha-D-ribose 1-diphosphate + ATP. Its pathway is amino-acid biosynthesis; L-histidine biosynthesis; L-histidine from 5-phospho-alpha-D-ribose 1-diphosphate: step 1/9. Its function is as follows. Catalyzes the condensation of ATP and 5-phosphoribose 1-diphosphate to form N'-(5'-phosphoribosyl)-ATP (PR-ATP). Has a crucial role in the pathway because the rate of histidine biosynthesis seems to be controlled primarily by regulation of HisG enzymatic activity. This chain is ATP phosphoribosyltransferase, found in Lachnoclostridium phytofermentans (strain ATCC 700394 / DSM 18823 / ISDg) (Clostridium phytofermentans).